A 211-amino-acid chain; its full sequence is Ribonuclease HII (211 aa).

An RNase H type-2 domain is found at 1-205; that stretch reads MRFGVDEAGK…CDDVLAAASQ (205 aa). The a divalent metal cation site is built by Asp6, Glu7, and Asp100.

Belongs to the RNase HII family. Requires Mn(2+) as cofactor. It depends on Mg(2+) as a cofactor.

It localises to the cytoplasm. It carries out the reaction Endonucleolytic cleavage to 5'-phosphomonoester.. Functionally, endonuclease that specifically degrades the RNA of RNA-DNA hybrids. This Haloarcula marismortui (strain ATCC 43049 / DSM 3752 / JCM 8966 / VKM B-1809) (Halobacterium marismortui) protein is Ribonuclease HII.